A 380-amino-acid polypeptide reads, in one-letter code: Pectin lyase (380 aa).

Positions 1 to 20 are cleaved as a signal peptide; sequence MRSASILSAALAAFAPLASA. N-linked (GlcNAc...) asparagine glycosylation is present at Asn-130.

The protein belongs to the polysaccharide lyase 1 family.

The protein resides in the secreted. It carries out the reaction Eliminative cleavage of (1-&gt;4)-alpha-D-galacturonan methyl ester to give oligosaccharides with 4-deoxy-6-O-methyl-alpha-D-galact-4-enuronosyl groups at their non-reducing ends.. The chain is Pectin lyase (PNLA) from Colletotrichum gloeosporioides (Anthracnose fungus).